We begin with the raw amino-acid sequence, 241 residues long: uncharacterized protein (241 aa).

7 consecutive transmembrane segments (helical) span residues 12–32 (ITEIYFQYVIYILCFGVLLLL), 39–59 (LLWLHLVSILVGLIANYEMKF), 89–109 (VYDVICHTIMVVICYHQICYT), 117–137 (YYTFHLFSVMIIIGALFNCVV), 152–172 (LFEYTTIFQALSTGYWVATML), 180–200 (IHFYSHWIIWIGLMTINWFVY), and 215–235 (YVEAVFIVCTWYSGIISSPLI).

This sequence belongs to the mimivirus L68/R809 family.

The protein localises to the membrane. This is an uncharacterized protein from Acanthamoeba polyphaga mimivirus (APMV).